Consider the following 1391-residue polypeptide: DNA-directed RNA polymerase subunit beta (1391 aa).

This sequence belongs to the RNA polymerase beta chain family. The RNAP catalytic core consists of 2 alpha, 1 beta, 1 beta' and 1 omega subunit. When a sigma factor is associated with the core the holoenzyme is formed, which can initiate transcription.

It catalyses the reaction RNA(n) + a ribonucleoside 5'-triphosphate = RNA(n+1) + diphosphate. In terms of biological role, DNA-dependent RNA polymerase catalyzes the transcription of DNA into RNA using the four ribonucleoside triphosphates as substrates. The protein is DNA-directed RNA polymerase subunit beta of Mycoplasma pneumoniae (strain ATCC 29342 / M129 / Subtype 1) (Mycoplasmoides pneumoniae).